A 559-amino-acid chain; its full sequence is Glucose-6-phosphate isomerase 4 (559 aa).

Residue Glu-356 is the Proton donor of the active site. Residues His-387 and Lys-513 contribute to the active site.

Belongs to the GPI family.

It is found in the cytoplasm. It catalyses the reaction alpha-D-glucose 6-phosphate = beta-D-fructose 6-phosphate. It functions in the pathway carbohydrate biosynthesis; gluconeogenesis. It participates in carbohydrate degradation; glycolysis; D-glyceraldehyde 3-phosphate and glycerone phosphate from D-glucose: step 2/4. Catalyzes the reversible isomerization of glucose-6-phosphate to fructose-6-phosphate. The protein is Glucose-6-phosphate isomerase 4 of Rhodococcus jostii (strain RHA1).